The following is a 269-amino-acid chain: Adenosylcobinamide-GDP ribazoletransferase (269 aa).

6 helical membrane-spanning segments follow: residues 63–83 (SAYY…LLYL), 87–107 (LPPG…TGML), 137–157 (VGAF…SLLG), 158–178 (AGLP…VVLM), 202–222 (LAFL…AALV), and 246–266 (VYGL…GWGF).

This sequence belongs to the CobS family. The cofactor is Mg(2+).

The protein localises to the cell membrane. The enzyme catalyses alpha-ribazole + adenosylcob(III)inamide-GDP = adenosylcob(III)alamin + GMP + H(+). It catalyses the reaction alpha-ribazole 5'-phosphate + adenosylcob(III)inamide-GDP = adenosylcob(III)alamin 5'-phosphate + GMP + H(+). The protein operates within cofactor biosynthesis; adenosylcobalamin biosynthesis; adenosylcobalamin from cob(II)yrinate a,c-diamide: step 7/7. Functionally, joins adenosylcobinamide-GDP and alpha-ribazole to generate adenosylcobalamin (Ado-cobalamin). Also synthesizes adenosylcobalamin 5'-phosphate from adenosylcobinamide-GDP and alpha-ribazole 5'-phosphate. The chain is Adenosylcobinamide-GDP ribazoletransferase from Deinococcus radiodurans (strain ATCC 13939 / DSM 20539 / JCM 16871 / CCUG 27074 / LMG 4051 / NBRC 15346 / NCIMB 9279 / VKM B-1422 / R1).